The sequence spans 354 residues: Photosystem II D2 protein (354 aa).

The residue at position 2 (T2) is an N-acetylthreonine. At T2 the chain carries Phosphothreonine. The chain crosses the membrane as a helical span at residues 42–62 (CAYFALGGFFTGNTFVTSWYT). H119 contacts chlorophyll a. The helical transmembrane segment at 126–142 (GFMLRQFEIARAVKIRP) threads the bilayer. Pheophytin a is bound by residues Q131 and N144. Residues 154 to 167 (VFVSVFLIYPLGQQ) traverse the membrane as a helical segment. H199 contacts chlorophyll a. The chain crosses the membrane as a helical span at residues 209-229 (AALLCAIHGATVENTLFEDGD). The a plastoquinone site is built by H216 and F263. Residue H216 participates in Fe cation binding. H270 lines the Fe cation pocket. The chain crosses the membrane as a helical span at residues 280–296 (GLWMSAIGVVGLALNLR).

Belongs to the reaction center PufL/M/PsbA/D family. As to quaternary structure, PSII is composed of 1 copy each of membrane proteins PsbA, PsbB, PsbC, PsbD, PsbE, PsbF, PsbH, PsbI, PsbJ, PsbK, PsbL, PsbM, PsbT, PsbX, PsbY, PsbZ, Psb30/Ycf12, at least 3 peripheral proteins of the oxygen-evolving complex and a large number of cofactors. It forms dimeric complexes. The D1/D2 heterodimer binds P680, chlorophylls that are the primary electron donor of PSII, and subsequent electron acceptors. It shares a non-heme iron and each subunit binds pheophytin, quinone, additional chlorophylls, carotenoids and lipids. There is also a Cl(-1) ion associated with D1 and D2, which is required for oxygen evolution. The PSII complex binds additional chlorophylls, carotenoids and specific lipids. is required as a cofactor.

Its subcellular location is the plastid. It is found in the chloroplast thylakoid membrane. It catalyses the reaction 2 a plastoquinone + 4 hnu + 2 H2O = 2 a plastoquinol + O2. In terms of biological role, photosystem II (PSII) is a light-driven water:plastoquinone oxidoreductase that uses light energy to abstract electrons from H(2)O, generating O(2) and a proton gradient subsequently used for ATP formation. It consists of a core antenna complex that captures photons, and an electron transfer chain that converts photonic excitation into a charge separation. The D1/D2 (PsbA/PsbD) reaction center heterodimer binds P680, the primary electron donor of PSII as well as several subsequent electron acceptors. D2 is needed for assembly of a stable PSII complex. The protein is Photosystem II D2 protein of Mesostigma viride (Green alga).